A 366-amino-acid chain; its full sequence is MTPEHLPTEQYEAQLAEKVARLQSMMAPFSGLVPEVFRSPVSHYRMRAEFRLWHDGDDLYHIMFDQQTKSRIRVDTFPAASQLINTLMKAMIAGVRDNHALRHKLFQIDYLTTLSNQAVVSLLYHKKLDEEWREAATALRDALRAQGLNVHLIGRATKTKIELDQDYIDERLPVAGKEMIYRQVENSFTQPNAAMNIQMLEWALEVTKDSKGDLLELYCGNGNFSLALARNFNRVLATEIAKPSVAAAQYNIAANHIDNVQIIRMAAEEFTQAMNGVREFNRLQGIDLKRYQCETIFVDPPRSGLDSETEKMVQAYPRILYISCNPETLCKNLETLSQTHTVSRLALFDQFPYTHHMECGVLLTAR.

Q190, Y218, N223, E239, and D299 together coordinate S-adenosyl-L-methionine. The active-site Nucleophile is the C324. E358 serves as the catalytic Proton acceptor.

It belongs to the class I-like SAM-binding methyltransferase superfamily. RNA M5U methyltransferase family. TrmA subfamily.

It carries out the reaction uridine(54) in tRNA + S-adenosyl-L-methionine = 5-methyluridine(54) in tRNA + S-adenosyl-L-homocysteine + H(+). The catalysed reaction is uridine(341) in tmRNA + S-adenosyl-L-methionine = 5-methyluridine(341) in tmRNA + S-adenosyl-L-homocysteine + H(+). Its function is as follows. Dual-specificity methyltransferase that catalyzes the formation of 5-methyluridine at position 54 (m5U54) in all tRNAs, and that of position 341 (m5U341) in tmRNA (transfer-mRNA). This chain is tRNA/tmRNA (uracil-C(5))-methyltransferase, found in Salmonella choleraesuis (strain SC-B67).